A 562-amino-acid chain; its full sequence is Sesquiterpene synthase (562 aa).

The Mg(2+) site is built by D315, D319, and E467. The DDXXD motif signature appears at 315–319; that stretch reads DDIYD.

Belongs to the terpene synthase family. Tpsa subfamily. Requires Mg(2+) as cofactor. The cofactor is Mn(2+).

In terms of biological role, catalyzes the formation of beta-elemol, guaiol and bulnesol. This chain is Sesquiterpene synthase, found in Santalum spicatum (Australian sandalwood).